The primary structure comprises 378 residues: Protein RecA (378 aa).

A disordered region spans residues Met-1–Lys-20. Gly-80–Thr-87 lines the ATP pocket. The interval Gly-344–Asp-378 is disordered. Acidic residues predominate over residues Ser-359 to Asp-378.

Belongs to the RecA family.

It localises to the cytoplasm. In terms of biological role, can catalyze the hydrolysis of ATP in the presence of single-stranded DNA, the ATP-dependent uptake of single-stranded DNA by duplex DNA, and the ATP-dependent hybridization of homologous single-stranded DNAs. It interacts with LexA causing its activation and leading to its autocatalytic cleavage. The sequence is that of Protein RecA from Fusobacterium nucleatum subsp. nucleatum (strain ATCC 25586 / DSM 15643 / BCRC 10681 / CIP 101130 / JCM 8532 / KCTC 2640 / LMG 13131 / VPI 4355).